The sequence spans 269 residues: Spermatogenesis-associated serine-rich protein 1 (269 aa).

Positions 1–14 are enriched in basic and acidic residues; the sequence is MESSKDTQHGDALE. The disordered stretch occupies residues 1-92; it reads MESSKDTQHG…SKVSLPEIPK (92 aa). Over residues 18 to 38 the composition is skewed to polar residues; it reads CLANRTSSRQNKRTSLSSSDG. T54 carries the phosphothreonine modification. Residues 67-86 show a composition bias toward low complexity; that stretch reads SSSSSSSSSSAQSNRSSKVS. Residues S72, S75, and S82 each carry the phosphoserine modification.

This is Spermatogenesis-associated serine-rich protein 1 (Spats1) from Mus musculus (Mouse).